A 70-amino-acid polypeptide reads, in one-letter code: Small ribosomal subunit protein bS21 (70 aa).

This sequence belongs to the bacterial ribosomal protein bS21 family.

This chain is Small ribosomal subunit protein bS21, found in Delftia acidovorans (strain DSM 14801 / SPH-1).